Reading from the N-terminus, the 431-residue chain is Histidinol dehydrogenase (431 aa).

3 residues coordinate NAD(+): Tyr-124, Gln-187, and Asn-210. Ser-236, Gln-258, and His-261 together coordinate substrate. Gln-258 and His-261 together coordinate Zn(2+). Active-site proton acceptor residues include Glu-325 and His-326. Substrate contacts are provided by His-326, Asp-359, Glu-413, and His-418. Asp-359 serves as a coordination point for Zn(2+). Residue His-418 participates in Zn(2+) binding.

The protein belongs to the histidinol dehydrogenase family. Zn(2+) is required as a cofactor.

It catalyses the reaction L-histidinol + 2 NAD(+) + H2O = L-histidine + 2 NADH + 3 H(+). It functions in the pathway amino-acid biosynthesis; L-histidine biosynthesis; L-histidine from 5-phospho-alpha-D-ribose 1-diphosphate: step 9/9. Its function is as follows. Catalyzes the sequential NAD-dependent oxidations of L-histidinol to L-histidinaldehyde and then to L-histidine. This chain is Histidinol dehydrogenase, found in Legionella pneumophila (strain Lens).